Here is a 152-residue protein sequence, read N- to C-terminus: Large ribosomal subunit protein bL9 (152 aa).

It belongs to the bacterial ribosomal protein bL9 family.

Its function is as follows. Binds to the 23S rRNA. The chain is Large ribosomal subunit protein bL9 from Coxiella burnetii (strain RSA 331 / Henzerling II).